Reading from the N-terminus, the 326-residue chain is Putative ABC transporter ATP-binding protein MA_4020 (326 aa).

Residues 1–12 show a composition bias toward polar residues; that stretch reads MTISTLSSSYGN. The interval 1-34 is disordered; it reads MTISTLSSSYGNAQDVPAEDSDRHGSIEPGSEKA. In terms of domain architecture, ABC transporter spans 46–281; that stretch reads LEVKNLCHRY…PELLRKAHLR (236 aa). 80 to 87 contacts ATP; that stretch reads GANGAGKS.

Belongs to the ABC transporter superfamily.

The protein localises to the cell membrane. Functionally, probably part of an ABC transporter complex. Responsible for energy coupling to the transport system. This Methanosarcina acetivorans (strain ATCC 35395 / DSM 2834 / JCM 12185 / C2A) protein is Putative ABC transporter ATP-binding protein MA_4020.